Reading from the N-terminus, the 558-residue chain is MADAAVHGHGDHHDTRGFFTRWFMSTNHKDIGILYLFTAGIVGLISVCFTVYMRMELQHPGVQYMCLEGARLIADASAECTPNGHLWNVMITYHGVLMMFFVVIPALFGGFGNYFMPLHIGAPDMAFPRLNNLSYWMYVCGVALGVASLLAPGGNDQMGSGVGWVLYPPLSTTEAGYSMDLAIFAVHVSGASSILGAINIITTFLNMRAPGMTLFKVPLFAWSVFITAWLILLSLPVLAGAITMLLMDRNFGTQFFDPAGGGDPVLYQHILWFFGHPEVYIIILPGFGIISHVISTFAKKPIFGYLPMVLAMAAIGILGFVVWAHHMYTAGMSLTQQAYFMLATMTIAVPTGIKVFSWIATMWGGSIEFKTPMLWAFGFLFLFTVGGVTGVVLSQAPLDRVYHDTYYVVAHFHYVMSLGAVFGIFAGVYYWIGKMSGRQYPEWAGQLHFWMMFIGSNLIFFPQHFLGRQGMPRRYIDYPVEFAYWNNISSIGAYISFASFLFFIGIVFYTLFAGKRVNVPNYWNEHADTLEWTLPSPPPEHTFETLPKREDWDRAHAH.

Topologically, residues 1–28 are cytoplasmic; it reads MADAAVHGHGDHHDTRGFFTRWFMSTNH. Residues 29–59 form a helical membrane-spanning segment; sequence KDIGILYLFTAGIVGLISVCFTVYMRMELQH. Residues 60–82 lie on the Periplasmic side of the membrane; it reads PGVQYMCLEGARLIADASAECTP. Residues C66 and C80 are joined by a disulfide bond. Residues 83–120 traverse the membrane as a helical segment; the sequence is NGHLWNVMITYHGVLMMFFVVIPALFGGFGNYFMPLHI. Residue H94 coordinates Fe(II)-heme a. The Cytoplasmic portion of the chain corresponds to 121-126; it reads GAPDMA. Residues 127–151 traverse the membrane as a helical segment; sequence FPRLNNLSYWMYVCGVALGVASLLA. Residues 152 to 176 are Periplasmic-facing; the sequence is PGGNDQMGSGVGWVLYPPLSTTEAG. The chain crosses the membrane as a helical span at residues 177–206; it reads YSMDLAIFAVHVSGASSILGAINIITTFLN. Over 207–217 the chain is Cytoplasmic; sequence MRAPGMTLFKV. The chain crosses the membrane as a helical span at residues 218 to 251; the sequence is PLFAWSVFITAWLILLSLPVLAGAITMLLMDRNF. Residues 252 to 262 are Periplasmic-facing; that stretch reads GTQFFDPAGGG. Residues 263 to 299 traverse the membrane as a helical segment; sequence DPVLYQHILWFFGHPEVYIIILPGFGIISHVISTFAK. Cu cation-binding residues include H276 and Y280. The segment at residues 276–280 is a cross-link (1'-histidyl-3'-tyrosine (His-Tyr)); that stretch reads HPEVY. Topologically, residues 300–303 are cytoplasmic; the sequence is KPIF. The chain crosses the membrane as a helical span at residues 304 to 331; the sequence is GYLPMVLAMAAIGILGFVVWAHHMYTAG. Cu cation-binding residues include H325 and H326. M332 is a topological domain (periplasmic). The helical transmembrane segment at 333–364 threads the bilayer; sequence SLTQQAYFMLATMTIAVPTGIKVFSWIATMWG. The Cytoplasmic segment spans residues 365–369; that stretch reads GSIEF. Residues 370–395 traverse the membrane as a helical segment; that stretch reads KTPMLWAFGFLFLFTVGGVTGVVLSQ. Topologically, residues 396–404 are periplasmic; the sequence is APLDRVYHD. Residues 405–437 traverse the membrane as a helical segment; it reads TYYVVAHFHYVMSLGAVFGIFAGVYYWIGKMSG. H411 is a binding site for heme a3. H413 is a binding site for Fe(II)-heme a. Residues 438-440 lie on the Cytoplasmic side of the membrane; it reads RQY. Residues 441-469 traverse the membrane as a helical segment; sequence PEWAGQLHFWMMFIGSNLIFFPQHFLGRQ. Residues 470-478 lie on the Periplasmic side of the membrane; the sequence is GMPRRYIDY. The chain crosses the membrane as a helical span at residues 479–514; sequence PVEFAYWNNISSIGAYISFASFLFFIGIVFYTLFAG. Residues 515–558 are Cytoplasmic-facing; that stretch reads KRVNVPNYWNEHADTLEWTLPSPPPEHTFETLPKREDWDRAHAH.

Belongs to the heme-copper respiratory oxidase family. Requires Cu(2+) as cofactor. It depends on heme as a cofactor. Post-translationally, his-276 and Tyr-280 are involved in the formation of a copper-coordinated covalent cross-link at the active site of the catalytic subunit I.

The protein resides in the cell inner membrane. The enzyme catalyses 4 Fe(II)-[cytochrome c] + O2 + 8 H(+)(in) = 4 Fe(III)-[cytochrome c] + 2 H2O + 4 H(+)(out). Its pathway is energy metabolism; oxidative phosphorylation. Subunit I and II form the functional core of the enzyme complex. Electrons originating in cytochrome c are transferred via heme a and Cu(A) to the binuclear center formed by heme a3 and Cu(B). This cytochrome c oxidase shows proton pump activity across the membrane in addition to the electron transfer. The chain is Cytochrome c oxidase subunit 1-beta (ctaDII) from Paracoccus denitrificans.